A 360-amino-acid polypeptide reads, in one-letter code: Protein phosphatase 1L (360 aa).

Over 1-25 (MIEDTMTLLSLLGRIMRYFLLRPET) the chain is Extracellular. Residues 26 to 42 (LFLLCISLALWSYFFHT) traverse the membrane as a helical segment. Topologically, residues 43–360 (DEVKTIVKSS…FRNSSKTEEH (318 aa)) are cytoplasmic. A PPM-type phosphatase domain is found at 92 to 351 (NVAVYSIQGR…DNITVMVVKF (260 aa)). The Mn(2+) site is built by Asp128, Gly129, Asp302, and Asp342.

This sequence belongs to the PP2C family. As to quaternary structure, interacts with MAP3K7/TAK1 and MAP3K5. Mg(2+) serves as cofactor. Requires Mn(2+) as cofactor. As to expression, expressed in brain, heart, testis, liver, lung and skeletal muscle.

It localises to the membrane. It catalyses the reaction O-phospho-L-seryl-[protein] + H2O = L-seryl-[protein] + phosphate. The enzyme catalyses O-phospho-L-threonyl-[protein] + H2O = L-threonyl-[protein] + phosphate. Functionally, acts as a suppressor of the SAPK signaling pathways by associating with and dephosphorylating MAP3K7/TAK1 and MAP3K5, and by attenuating the association between MAP3K7/TAK1 and MAP2K4 or MAP2K6. This is Protein phosphatase 1L (Ppm1l) from Mus musculus (Mouse).